Here is a 291-residue protein sequence, read N- to C-terminus: Glutamate racemase (291 aa).

Substrate-binding positions include 12 to 13 (DS) and 44 to 45 (YG). The active-site Proton donor/acceptor is the Cys75. 76 to 77 (NT) lines the substrate pocket. The active-site Proton donor/acceptor is Cys187. 188–189 (TH) contacts substrate. Over residues 234–247 (ATQAAGARAQMAPS) the composition is skewed to low complexity. The segment at 234 to 257 (ATQAAGARAQMAPSAPEPKEGTPD) is disordered.

Belongs to the aspartate/glutamate racemases family.

It catalyses the reaction L-glutamate = D-glutamate. It participates in cell wall biogenesis; peptidoglycan biosynthesis. In terms of biological role, provides the (R)-glutamate required for cell wall biosynthesis. The sequence is that of Glutamate racemase from Koribacter versatilis (strain Ellin345).